A 277-amino-acid polypeptide reads, in one-letter code: Probable endonuclease 4 (277 aa).

Zn(2+) is bound by residues His-67, His-107, Glu-141, Asp-173, His-176, His-207, Asp-220, His-222, and Glu-252.

This sequence belongs to the AP endonuclease 2 family. It depends on Zn(2+) as a cofactor.

The catalysed reaction is Endonucleolytic cleavage to 5'-phosphooligonucleotide end-products.. In terms of biological role, endonuclease IV plays a role in DNA repair. It cleaves phosphodiester bonds at apurinic or apyrimidinic (AP) sites, generating a 3'-hydroxyl group and a 5'-terminal sugar phosphate. In Finegoldia magna (strain ATCC 29328 / DSM 20472 / WAL 2508) (Peptostreptococcus magnus), this protein is Probable endonuclease 4.